Consider the following 678-residue polypeptide: DNA ligase (678 aa).

NAD(+)-binding positions include 47-51, 96-97, and Glu122; these read DSDYD and SL. Lys124 serves as the catalytic N6-AMP-lysine intermediate. Arg145, Glu182, Lys300, and Lys324 together coordinate NAD(+). 4 residues coordinate Zn(2+): Cys418, Cys421, Cys436, and Cys442. Residues 602 to 678 enclose the BRCT domain; that stretch reads AYNESFTGKT…ILEDNLKDLL (77 aa).

This sequence belongs to the NAD-dependent DNA ligase family. LigA subfamily. Mg(2+) serves as cofactor. Mn(2+) is required as a cofactor.

The catalysed reaction is NAD(+) + (deoxyribonucleotide)n-3'-hydroxyl + 5'-phospho-(deoxyribonucleotide)m = (deoxyribonucleotide)n+m + AMP + beta-nicotinamide D-nucleotide.. In terms of biological role, DNA ligase that catalyzes the formation of phosphodiester linkages between 5'-phosphoryl and 3'-hydroxyl groups in double-stranded DNA using NAD as a coenzyme and as the energy source for the reaction. It is essential for DNA replication and repair of damaged DNA. This Francisella tularensis subsp. holarctica (strain LVS) protein is DNA ligase.